Consider the following 291-residue polypeptide: Undecaprenyl-diphosphatase (291 aa).

8 helical membrane-spanning segments follow: residues 1-21 (MFII…LTEF), 48-68 (SAFT…AWVF), 102-122 (LHVL…DDFI), 126-146 (LFSV…MIIA), 162-182 (INYF…WPGF), 203-223 (SDFT…LSLL), 231-251 (IADI…GLIA), and 267-287 (FAIY…GFGI).

The protein belongs to the UppP family.

The protein resides in the cell membrane. The enzyme catalyses di-trans,octa-cis-undecaprenyl diphosphate + H2O = di-trans,octa-cis-undecaprenyl phosphate + phosphate + H(+). Its function is as follows. Catalyzes the dephosphorylation of undecaprenyl diphosphate (UPP). Confers resistance to bacitracin. In Staphylococcus aureus (strain bovine RF122 / ET3-1), this protein is Undecaprenyl-diphosphatase.